The following is a 79-amino-acid chain: Putative membrane protein insertion efficiency factor (79 aa).

Belongs to the UPF0161 family.

Its subcellular location is the cell inner membrane. Could be involved in insertion of integral membrane proteins into the membrane. In Prochlorococcus marinus (strain NATL1A), this protein is Putative membrane protein insertion efficiency factor.